Consider the following 897-residue polypeptide: Zinc finger protein zas1 (897 aa).

C2H2-type zinc fingers lie at residues 26–50 and 56–79; these read FYCT…ERTH and FSCS…QQMH. A C2H2-type 3; atypical zinc finger spans residues 93–119; sequence ASCFLGFCVLAHDYVNLINARHFMIEH.

The protein resides in the nucleus. In Schizosaccharomyces pombe (strain 972 / ATCC 24843) (Fission yeast), this protein is Zinc finger protein zas1 (zas1).